The sequence spans 87 residues: Phosphoribosyl-ATP pyrophosphatase (87 aa).

This sequence belongs to the PRA-PH family.

The protein resides in the cytoplasm. It carries out the reaction 1-(5-phospho-beta-D-ribosyl)-ATP + H2O = 1-(5-phospho-beta-D-ribosyl)-5'-AMP + diphosphate + H(+). It participates in amino-acid biosynthesis; L-histidine biosynthesis; L-histidine from 5-phospho-alpha-D-ribose 1-diphosphate: step 2/9. The polypeptide is Phosphoribosyl-ATP pyrophosphatase (Clavibacter sepedonicus (Clavibacter michiganensis subsp. sepedonicus)).